The following is a 610-amino-acid chain: DNA mismatch repair protein MutL (610 aa).

The protein belongs to the DNA mismatch repair MutL/HexB family.

In terms of biological role, this protein is involved in the repair of mismatches in DNA. It is required for dam-dependent methyl-directed DNA mismatch repair. May act as a 'molecular matchmaker', a protein that promotes the formation of a stable complex between two or more DNA-binding proteins in an ATP-dependent manner without itself being part of a final effector complex. This is DNA mismatch repair protein MutL from Rickettsia canadensis (strain McKiel).